The primary structure comprises 304 residues: MHRLRQCNMKWGAEEEKKIELQAQGLQPDTLFSDVIKRYLNKITPTKRGEKHEFNRLNRFLRHPVTDKYISDVSRRDIEDWIAERLESVKSESVRRELSTIGHIFKIALERWGYIQKSPMVGIQLPEKGKPRTQRVTEENINAIVAISEYVDTLKTAKARTAAAILFAVETAMRAGKICSLSWGNVNFEKRTAFLPMTKNGTSRTVPLTKNAIAILERLKVEIGDAGLCFDIKSSVLDATFRKLKKLAEREYLHFHDTRREALTRLSKKVDVMTLAKISGHKDISILQNVYYAPDMAEVAELLD.

In terms of domain architecture, Core-binding (CB) spans 30–109; that stretch reads TLFSDVIKRY…TIGHIFKIAL (80 aa). The Tyr recombinase domain occupies 131–304; that stretch reads PRTQRVTEEN…DMAEVAELLD (174 aa). Active-site residues include Arg174, Lys199, His256, Arg259, and His281. Tyr291 serves as the catalytic O-(3'-phospho-DNA)-tyrosine intermediate.

Belongs to the 'phage' integrase family.

This Haemophilus influenzae (strain ATCC 51907 / DSM 11121 / KW20 / Rd) protein is Putative integrase/recombinase HI_1414.